The following is a 395-amino-acid chain: Elongation factor Tu (395 aa).

A tr-type G domain is found at 10–204 (KTHANIGTIG…AVDEYIPTPE (195 aa)). Residues 19–26 (GHVDHGKT) form a G1 region. 19–26 (GHVDHGKT) is a GTP binding site. A Mg(2+)-binding site is contributed by Thr26. The tract at residues 60–64 (GITIN) is G2. The G3 stretch occupies residues 81-84 (DCPG). GTP contacts are provided by residues 81–85 (DCPGH) and 136–139 (NKVD). Residues 136–139 (NKVD) form a G4 region. The segment at 174–176 (SAL) is G5.

The protein belongs to the TRAFAC class translation factor GTPase superfamily. Classic translation factor GTPase family. EF-Tu/EF-1A subfamily. Monomer.

The protein localises to the cytoplasm. The enzyme catalyses GTP + H2O = GDP + phosphate + H(+). Functionally, GTP hydrolase that promotes the GTP-dependent binding of aminoacyl-tRNA to the A-site of ribosomes during protein biosynthesis. The chain is Elongation factor Tu from Macrococcus caseolyticus (strain JCSC5402) (Macrococcoides caseolyticum).